A 361-amino-acid chain; its full sequence is GTPase Obg (361 aa).

The 159-residue stretch at 1-159 folds into the Obg domain; the sequence is MKFVDEAFID…KNLKLELKVL (159 aa). An OBG-type G domain is found at 160 to 334; that stretch reads ADVGLLGMPN…LIKTIYQHVK (175 aa). GTP contacts are provided by residues 166–173, 191–195, 213–216, 284–287, and 315–317; these read GMPNAGKS, FTTLH, DLPG, NKLD, and SAL. Residues serine 173 and threonine 193 each coordinate Mg(2+). The tract at residues 339-361 is disordered; sequence SEQPVEEVDPRFVPLPPESPETP. Positions 351–361 are enriched in pro residues; the sequence is VPLPPESPETP.

This sequence belongs to the TRAFAC class OBG-HflX-like GTPase superfamily. OBG GTPase family. Monomer. Requires Mg(2+) as cofactor.

It localises to the cytoplasm. Its function is as follows. An essential GTPase which binds GTP, GDP and possibly (p)ppGpp with moderate affinity, with high nucleotide exchange rates and a fairly low GTP hydrolysis rate. Plays a role in control of the cell cycle, stress response, ribosome biogenesis and in those bacteria that undergo differentiation, in morphogenesis control. This Polaromonas sp. (strain JS666 / ATCC BAA-500) protein is GTPase Obg.